A 58-amino-acid chain; its full sequence is Large ribosomal subunit protein bL32 (58 aa).

This sequence belongs to the bacterial ribosomal protein bL32 family.

This is Large ribosomal subunit protein bL32 from Anaplasma phagocytophilum (strain HZ).